Reading from the N-terminus, the 411-residue chain is Na(+)-translocating NADH-quinone reductase subunit F (411 aa).

The helical transmembrane segment at 5-25 threads the bilayer; it reads VILALGIAAFTVIVLVLVAII. Positions 36–130 constitute a 2Fe-2S ferredoxin-type domain; sequence GDITIDINDD…NMEVELPEEI (95 aa). [2Fe-2S] cluster is bound by residues Cys-73, Cys-79, Cys-82, and Cys-114. Residues 133–273 form the FAD-binding FR-type domain; it reads VKKWECTVIS…SGPFGEFFAK (141 aa).

The protein belongs to the NqrF family. Composed of six subunits; NqrA, NqrB, NqrC, NqrD, NqrE and NqrF. Requires [2Fe-2S] cluster as cofactor. It depends on FAD as a cofactor.

The protein localises to the cell inner membrane. The enzyme catalyses a ubiquinone + n Na(+)(in) + NADH + H(+) = a ubiquinol + n Na(+)(out) + NAD(+). Functionally, NQR complex catalyzes the reduction of ubiquinone-1 to ubiquinol by two successive reactions, coupled with the transport of Na(+) ions from the cytoplasm to the periplasm. The first step is catalyzed by NqrF, which accepts electrons from NADH and reduces ubiquinone-1 to ubisemiquinone by a one-electron transfer pathway. This is Na(+)-translocating NADH-quinone reductase subunit F from Haemophilus influenzae (strain PittGG).